The primary structure comprises 312 residues: Pantothenate kinase (312 aa).

97 to 104 is a binding site for ATP; sequence GSVAVGKS.

Belongs to the prokaryotic pantothenate kinase family.

The protein localises to the cytoplasm. It catalyses the reaction (R)-pantothenate + ATP = (R)-4'-phosphopantothenate + ADP + H(+). It functions in the pathway cofactor biosynthesis; coenzyme A biosynthesis; CoA from (R)-pantothenate: step 1/5. This chain is Pantothenate kinase, found in Mycobacterium sp. (strain JLS).